The sequence spans 557 residues: ADP-ribosylation factor-binding protein GGA1 (557 aa).

The 137-residue stretch at Ala-29 to Pro-165 folds into the VHS domain. Positions Glu-192–Gly-317 constitute a GAT domain. Thr-348 is subject to Phosphothreonine. Phosphoserine is present on residues Ser-353, Ser-357, Ser-378, and Ser-394. One can recognise a GAE domain in the interval Ala-440–Thr-556.

Binds to ARF1 and ARF2.

The protein localises to the golgi apparatus. It localises to the trans-Golgi network. Its function is as follows. May play a role in the regulation of membrane traffic through the trans-Golgi network. The sequence is that of ADP-ribosylation factor-binding protein GGA1 (GGA1) from Saccharomyces cerevisiae (strain ATCC 204508 / S288c) (Baker's yeast).